The sequence spans 497 residues: NAD(P)H-quinone oxidoreductase chain 4, chloroplastic (497 aa).

14 consecutive transmembrane segments (helical) span residues 5–25 (VPWL…IPIL), 36–56 (YTLG…YCHF), 88–108 (LGLV…AWPI), 112–132 (TRLF…LFVS), 135–155 (ILLF…LLCL), 168–188 (FVLY…TMSF), 212–232 (VLIY…FPFH), 243–263 (HYST…YGLI), 275–295 (FLLG…ASLI), 306–326 (IAYS…SFTE), 331–351 (GAIL…FLAG), 387–407 (LALP…GVVT), 418–438 (GITV…LSML), and 463–483 (LFIL…PNLI).

The protein belongs to the complex I subunit 4 family.

It is found in the plastid. Its subcellular location is the chloroplast thylakoid membrane. It catalyses the reaction a plastoquinone + NADH + (n+1) H(+)(in) = a plastoquinol + NAD(+) + n H(+)(out). The enzyme catalyses a plastoquinone + NADPH + (n+1) H(+)(in) = a plastoquinol + NADP(+) + n H(+)(out). The protein is NAD(P)H-quinone oxidoreductase chain 4, chloroplastic of Adiantum capillus-veneris (Maidenhair fern).